Here is a 642-residue protein sequence, read N- to C-terminus: Chaperone protein DnaK (642 aa).

A Phosphothreonine; by autocatalysis modification is found at threonine 200. Over residues 608 to 618 the composition is skewed to low complexity; the sequence is QAESQAAGEGQ. Residues 608–642 form a disordered region; that stretch reads QAESQAAGEGQPDAGKKDDGNVVDAEFEEVKKDKQ.

Belongs to the heat shock protein 70 family.

Acts as a chaperone. The polypeptide is Chaperone protein DnaK (Laribacter hongkongensis (strain HLHK9)).